The primary structure comprises 334 residues: MCDSSQSTADVLIIGGGPAGSNAAWELGQAHHRVILFNASIDRLRDPDVNTASTRPALDLLLHSRRKTPDVFRPFRQEIGKESSEVSVHNQRITQVQRLPNGFFQAEDDVGHVWTAKVLVLADGAEEILPDIDGYDTCWEQQRILTHPAEDEPRSLISSCLAVLAVGDLAELTMALHTVWQARQFAASVRVYTHGDEDLARALETRISPDARIAIQTTPIQSLQPGSDSPSQVVVHLADGSSIVESHVYHRPASQLQGPFARQLNLELTESGAIRISARVPYMTSLDGVYAGGDCASLGQRTLFKALAMGQGLAAAVAARLERGNWGNAVEEQD.

Residues 16–19 (GGPA), 38–43 (NASIDR), I93, A122, D294, and 302–303 (TL) contribute to the FAD site.

The protein belongs to the class-II pyridine nucleotide-disulfide oxidoreductase family. In terms of assembly, homodimer. FAD is required as a cofactor.

Its pathway is mycotoxin biosynthesis. Thioredoxin reductase; part of the gene cluster that mediates the biosynthesis of aspirochlorine (or antibiotic A30641), an unusual halogenated spiro compound with distinctive antifungal properties due to selective inhibition of protein biosynthesis, and which is also active against bacteria, viruses, and murine tumor cells. The non-ribosomal peptide synthetase (NRPS) aclP is responsible the formation of the diketopiperazine (DKP) core from the condensation of 2 phenylalanine residues. One Phe residue is tailored into chlorotyrosine by hydroxylation and chlorination, whereas the second Phe undergoes an unprecedented C-C bond cleavage to be converted into glycine. After formation of the DKP, sulfur is incorporated into the DKP by conjugation with glutathione by aclG, followed by its stepwise degradation to the thiol by aclI, aclJ and aclK, and the dithiol oxidation by aclT. In addition, oxygenases (aclB, aclC, aclL and aclO) and O-methyltransferases (aclM and aclU) act as tailoring enzymes to produce the intermediate dechloroaspirochlorine. Ultimately, chlorination of dechloroaspirochlorine by the halogenase aclH is the last step in the aspirochlorine pathway. This is Thioredoxin reductase aclT from Aspergillus oryzae (strain ATCC 42149 / RIB 40) (Yellow koji mold).